Reading from the N-terminus, the 627-residue chain is Carene synthase, chloroplastic (627 aa).

A chloroplast-targeting transit peptide spans 1–36 (MSVISILPLASKSCLYKSLMSSTHELKALCRPIATL). Residues Asp-378, Asp-382, and Asp-530 each contribute to the Mg(2+) site. The DDXXD motif signature appears at 378–382 (DDMYD).

It belongs to the terpene synthase family. Tpsd subfamily. It depends on Mg(2+) as a cofactor. Mn(2+) serves as cofactor.

The protein localises to the plastid. It is found in the chloroplast. The enzyme catalyses (2E)-geranyl diphosphate = (+)-car-3-ene + diphosphate. It functions in the pathway terpene metabolism; oleoresin biosynthesis. Functionally, terpene synthase (TPS) involved in defensive oleoresin formation in conifers in response to insect attack or other injury. This is Carene synthase, chloroplastic (JF67) from Picea abies (Norway spruce).